We begin with the raw amino-acid sequence, 468 residues long: Pituitary adenylate cyclase-activating polypeptide type I receptor (468 aa).

The signal sequence occupies residues 1–20 (MAGVVHVSLAALLLLPMAPA). Over 21 to 152 (MHSDCIFKKE…TGDQDYYYLS (132 aa)) the chain is Extracellular. Cystine bridges form between Cys34–Cys63, Cys54–Cys118, and Cys77–Cys134. N-linked (GlcNAc...) asparagine glycosylation is found at Asn48, Asn60, and Asn117. Residues 125 to 139 (EPFPHYFDACGFDEY) form an important for ADCYAP1/PACAP ligand binding and specificity region. A helical membrane pass occupies residues 153–177 (VKALYTVGYSTSLVTLTTAMVILCR). Topologically, residues 178–187 (FRKLHCTRNF) are cytoplasmic. A helical membrane pass occupies residues 188 to 208 (IHMNLFVSFMLRAISVFIKDW). The Extracellular segment spans residues 209 to 223 (ILYAEQDSNHCFIST). A helical transmembrane segment spans residues 224 to 249 (VECKAVMVFFHYCVVSNYFWLFIEGL). An intrachain disulfide couples Cys226 to Cys296. The Cytoplasmic portion of the chain corresponds to 250–267 (YLFTLLVETFFPERRYFY). Residues 268 to 290 (WYTIIGWGTPTVCVTVWATLRLY) form a helical membrane-spanning segment. Residues 291–302 (FDDTGCWDMNDS) lie on the Extracellular side of the membrane. Asn300 carries N-linked (GlcNAc...) asparagine glycosylation. The helical transmembrane segment at 303-329 (TALWWVIKGPVVGSIMVNFVLFIGIIV) threads the bilayer. Residues 330–347 (ILVQKLQSPDMGGNESSI) are Cytoplasmic-facing. Residues 348–374 (YLRLARSTLLLIPLFGIHYTVFAFSPE) form a helical membrane-spanning segment. An N-linked (GlcNAc...) asparagine glycan is attached at Asn375. The Extracellular portion of the chain corresponds to 375–379 (NVSKR). Residues 380–403 (ERLVFELGLGSFQGFVVAVLYCFL) traverse the membrane as a helical segment. At 404-468 (NGEVQAEIKR…SGLPADNLAT (65 aa)) the chain is on the cytoplasmic side. A phosphoserine mark is found at Ser434 and Ser447.

The protein belongs to the G-protein coupled receptor 2 family. As to quaternary structure, interacts with maxadilan, a vasodilator peptide from Lutzomyia longipalpis saliva; the interaction results in ADCYAP1R1 activation. In terms of tissue distribution, most abundant in the brain, low expression in the lung, liver, thymus, spleen, pancreas and placenta.

Its subcellular location is the cell membrane. Its activity is regulated as follows. Several synthetic peptides derived from maxadilan, a vasodilator peptide from Lutzomyia longipalpis saliva, act as antagonists for ADCYAP1R1. G protein-coupled receptor activated by the neuropeptide pituitary adenylate cyclase-activating polypeptide (ADCYAP1/PACAP). Binds both PACAP27 and PACAP38 bioactive peptides. Ligand binding causes a conformation change that triggers signaling via guanine nucleotide-binding proteins (G proteins) and modulates the activity of downstream effectors. Activates cAMP-dependent pathway. May regulate the release of adrenocorticotropin, luteinizing hormone, growth hormone, prolactin, epinephrine, and catecholamine. May play a role in spermatogenesis and sperm motility. Causes smooth muscle relaxation and secretion in the gastrointestinal tract. This Homo sapiens (Human) protein is Pituitary adenylate cyclase-activating polypeptide type I receptor.